Here is an 857-residue protein sequence, read N- to C-terminus: Linoleate 9S-lipoxygenase 6 (857 aa).

Residues 26–156 (NALDFTDLAG…RYKSDRIFFA (131 aa)) enclose the PLAT domain. The Lipoxygenase domain maps to 159–857 (PYLPSETPEL…GKGIPNSVSI (699 aa)). The tract at residues 205-243 (NPDQGEQNVRTTLGGSADYPYPRRGRTGRPPTRTDPKSE) is disordered. Residues 208-218 (QGEQNVRTTLG) show a composition bias toward polar residues. Fe cation is bound by residues histidine 518, histidine 523, histidine 709, asparagine 713, and isoleucine 857.

This sequence belongs to the lipoxygenase family. Monomer. Fe cation serves as cofactor. As to expression, expressed in tubers and roots. Detected in leaves, petioles and stems.

It is found in the cytoplasm. The enzyme catalyses (9Z,12Z)-octadecadienoate + O2 = (9S)-hydroperoxy-(10E,12Z)-octadecadienoate. Its pathway is lipid metabolism; oxylipin biosynthesis. Its function is as follows. Plant lipoxygenases may be involved in a number of diverse aspects of plant physiology including growth and development, pest resistance, and senescence or responses to wounding. Catalyzes the hydroperoxidation of lipids containing a cis,cis-1,4-pentadiene structure. Linoleic and linolenic acids are the preferred substrates, but is also active with arachidonic acid. The products are almost exclusively the S enantiomers. The chain is Linoleate 9S-lipoxygenase 6 (LOX1.6) from Solanum tuberosum (Potato).